A 445-amino-acid chain; its full sequence is Reticulon-4 receptor-like 1 (445 aa).

The signal sequence occupies residues 1–24; sequence MLRKGCCVELLLLLLAGELPLGGG. Residues 25–54 enclose the LRRNT domain; that stretch reads CPRDCVCYPAPMTVSCQAHNFAAIPEGIPE. 8 LRR repeats span residues 55–76, 77–98, 101–123, 126–147, 150–171, 174–195, 198–219, and 222–243; these read DSER…HFSP, AMVT…TFEG, HLEE…TFQG, KLHA…IFGG, SLQY…IFVD, NLSH…IFRG, NLDR…AFHD, and RLTT…CLAP. The LRRCT domain occupies 255–306; sequence NAWDCGCRARSLWEWLRRFRGSSSAVPCATPELRQGQDLKLLRVEDFRNCTG. Disordered stretches follow at residues 307 to 377 and 401 to 424; these read PVSP…SGKE and RPKR…QQAS. 2 stretches are compositionally biased toward basic residues: residues 352–366 and 401–413; these read GYKK…HRNR and RPKR…RRTP. A lipid anchor (GPI-anchor amidated serine) is attached at Ser424. The helical transmembrane segment at 424–444 threads the bilayer; it reads SSGTALGAPLLAWILGLAVTL. Residues 425–445 constitute a propeptide, removed in mature form; sequence SGTALGAPLLAWILGLAVTLR.

Belongs to the Nogo receptor family. Identified in a complex that contains RTN4R, RTN4RL1 and NGFR; the interaction depends on the presence of chondroitin sulfate proteoglycans. Does not interact with MAG, OMG and RTN4. Detected in brain (at protein level). Detected in retina ganglion cell layer and inner nuclear layer.

It is found in the cell membrane. Its subcellular location is the membrane raft. It localises to the perikaryon. The protein localises to the cell projection. In terms of biological role, cell surface receptor that plays a functionally redundant role in postnatal brain development and in regulating axon regeneration in the adult central nervous system. Contributes to normal axon migration across the brain midline and normal formation of the corpus callosum. Protects motoneurons against apoptosis; protection against apoptosis is probably mediated by MAG. Plays a role in inhibiting neurite outgrowth and axon regeneration via its binding to neuronal chondroitin sulfate proteoglycans. Binds heparin. Like other family members, plays a role in restricting the number dendritic spines and the number of synapses that are formed during brain development. Signaling mediates activation of Rho and downstream reorganization of the actin cytoskeleton. This chain is Reticulon-4 receptor-like 1, found in Mus musculus (Mouse).